The sequence spans 226 residues: Charged multivesicular body protein 5 (226 aa).

Residues I21–N93 adopt a coiled-coil conformation. Positions K188 to G198 are enriched in basic and acidic residues. A disordered region spans residues K188–T226. Phosphoserine is present on S201. T226 is subject to Phosphothreonine.

This sequence belongs to the SNF7 family. In terms of assembly, probable peripherally associated component of the endosomal sorting required for transport complex III (ESCRT-III).

The protein localises to the endosome membrane. Its function is as follows. Probable peripherally associated component of the endosomal sorting required for transport complex III (ESCRT-III) which is involved in multivesicular bodies (MVBs) formation and sorting of endosomal cargo proteins into MVBs. MVBs contain intraluminal vesicles (ILVs) that are generated by invagination and scission from the limiting membrane of the endosome and are delivered to lysosomes enabling degradation of membrane proteins. Specifically down-regulates Notch signaling activity in the germarium, probably by facilitating Notch endocytosis. This chain is Charged multivesicular body protein 5, found in Drosophila melanogaster (Fruit fly).